The sequence spans 124 residues: Ribonuclease pancreatic (124 aa).

Positions 1–13 (KETAAAKFERQHM) are enriched in basic and acidic residues. The interval 1-25 (KETAAAKFERQHMDSSTSSASSSNY) is disordered. The substrate site is built by lysine 7 and arginine 10. Residue histidine 12 is the Proton acceptor of the active site. Intrachain disulfides connect cysteine 26-cysteine 84, cysteine 40-cysteine 95, cysteine 58-cysteine 110, and cysteine 65-cysteine 72. Substrate is bound by residues 41 to 45 (KPVNT), lysine 66, and arginine 85. Histidine 119 (proton donor) is an active-site residue.

The protein belongs to the pancreatic ribonuclease family. Monomer. Interacts with and forms tight 1:1 complexes with RNH1. Dimerization of two such complexes may occur. Interaction with RNH1 inhibits this protein. In terms of tissue distribution, pancreas.

It localises to the secreted. It carries out the reaction an [RNA] containing cytidine + H2O = an [RNA]-3'-cytidine-3'-phosphate + a 5'-hydroxy-ribonucleotide-3'-[RNA].. It catalyses the reaction an [RNA] containing uridine + H2O = an [RNA]-3'-uridine-3'-phosphate + a 5'-hydroxy-ribonucleotide-3'-[RNA].. Endonuclease that catalyzes the cleavage of RNA on the 3' side of pyrimidine nucleotides. Acts on single-stranded and double-stranded RNA. The polypeptide is Ribonuclease pancreatic (RNASE1) (Tragelaphus oryx (Eland)).